The primary structure comprises 341 residues: S-adenosylmethionine:tRNA ribosyltransferase-isomerase (341 aa).

The protein belongs to the QueA family. Monomer.

Its subcellular location is the cytoplasm. The catalysed reaction is 7-aminomethyl-7-carbaguanosine(34) in tRNA + S-adenosyl-L-methionine = epoxyqueuosine(34) in tRNA + adenine + L-methionine + 2 H(+). It participates in tRNA modification; tRNA-queuosine biosynthesis. In terms of biological role, transfers and isomerizes the ribose moiety from AdoMet to the 7-aminomethyl group of 7-deazaguanine (preQ1-tRNA) to give epoxyqueuosine (oQ-tRNA). This is S-adenosylmethionine:tRNA ribosyltransferase-isomerase from Clostridium perfringens (strain SM101 / Type A).